The following is a 387-amino-acid chain: Putative protein FAM157C (387 aa).

Disordered regions lie at residues 1-21 (MGPLFTTIPGAHSGPMRPLPK), 182-226 (TARP…GAEP), and 329-353 (RARDPAPTNFPLKCQKQRGASTSSG).

This sequence belongs to the FAM157 family.

The chain is Putative protein FAM157C (FAM157C) from Homo sapiens (Human).